Consider the following 856-residue polypeptide: Valine--tRNA ligase (856 aa).

A 'HIGH' region motif is present at residues P47–H57. Positions K578–S582 match the 'KMSKS' region motif. ATP is bound at residue K581.

The protein belongs to the class-I aminoacyl-tRNA synthetase family. ValS type 2 subfamily. Monomer.

It localises to the cytoplasm. It catalyses the reaction tRNA(Val) + L-valine + ATP = L-valyl-tRNA(Val) + AMP + diphosphate. Functionally, catalyzes the attachment of valine to tRNA(Val). As ValRS can inadvertently accommodate and process structurally similar amino acids such as threonine, to avoid such errors, it has a 'posttransfer' editing activity that hydrolyzes mischarged Thr-tRNA(Val) in a tRNA-dependent manner. The protein is Valine--tRNA ligase of Tropheryma whipplei (strain Twist) (Whipple's bacillus).